Reading from the N-terminus, the 57-residue chain is Large ribosomal subunit protein bL32 (57 aa).

The protein belongs to the bacterial ribosomal protein bL32 family.

This chain is Large ribosomal subunit protein bL32, found in Streptomyces avermitilis (strain ATCC 31267 / DSM 46492 / JCM 5070 / NBRC 14893 / NCIMB 12804 / NRRL 8165 / MA-4680).